A 126-amino-acid chain; its full sequence is Large ribosomal subunit protein bL12 (126 aa).

The protein belongs to the bacterial ribosomal protein bL12 family. As to quaternary structure, homodimer. Part of the ribosomal stalk of the 50S ribosomal subunit. Forms a multimeric L10(L12)X complex, where L10 forms an elongated spine to which 2 to 4 L12 dimers bind in a sequential fashion. Binds GTP-bound translation factors.

Forms part of the ribosomal stalk which helps the ribosome interact with GTP-bound translation factors. Is thus essential for accurate translation. In Desulfatibacillum aliphaticivorans, this protein is Large ribosomal subunit protein bL12.